The chain runs to 105 residues: CRISPR-associated endoribonuclease Cas2 1 (105 aa).

Asp20 contacts Mg(2+).

Belongs to the CRISPR-associated endoribonuclease Cas2 protein family. In terms of assembly, homodimer, forms a heterotetramer with a Cas1 homodimer. The cofactor is Mg(2+).

Functionally, CRISPR (clustered regularly interspaced short palindromic repeat), is an adaptive immune system that provides protection against mobile genetic elements (viruses, transposable elements and conjugative plasmids). CRISPR clusters contain sequences complementary to antecedent mobile elements and target invading nucleic acids. CRISPR clusters are transcribed and processed into CRISPR RNA (crRNA). Functions as a ssRNA-specific endoribonuclease. Involved in the integration of spacer DNA into the CRISPR cassette. This is CRISPR-associated endoribonuclease Cas2 1 (cas21) from Nitrosomonas europaea (strain ATCC 19718 / CIP 103999 / KCTC 2705 / NBRC 14298).